The following is a 336-amino-acid chain: tRNA N6-adenosine threonylcarbamoyltransferase (336 aa).

The Fe cation site is built by His-112 and His-116. Substrate-binding positions include 136–140 (LVSGG), Asp-169, Gly-182, and Asn-276. Asp-304 contacts Fe cation.

Belongs to the KAE1 / TsaD family. It depends on Fe(2+) as a cofactor.

It is found in the cytoplasm. It catalyses the reaction L-threonylcarbamoyladenylate + adenosine(37) in tRNA = N(6)-L-threonylcarbamoyladenosine(37) in tRNA + AMP + H(+). Its function is as follows. Required for the formation of a threonylcarbamoyl group on adenosine at position 37 (t(6)A37) in tRNAs that read codons beginning with adenine. Is involved in the transfer of the threonylcarbamoyl moiety of threonylcarbamoyl-AMP (TC-AMP) to the N6 group of A37, together with TsaE and TsaB. TsaD likely plays a direct catalytic role in this reaction. The protein is tRNA N6-adenosine threonylcarbamoyltransferase of Francisella tularensis subsp. novicida (strain U112).